The chain runs to 268 residues: MTGLSINNLSMRFELPNGDHVQALQDVSLDLKAGELLSVLGPSGCGKTTLLNIVAGFLAPTSGELILNGHRITGPDAERGMVFQQGALFEWMSVRENVAFGPSMKGTPKVDKDKTVDHLLDVVGLQDFKEKAVYELSGGMQQRVALARCLANDPDVILMDEPLGALDALTREKMQSLVLKLWKETGKTIILITHSVEEALLLGERLIVMAPRPGRIHKEYRLPFADLGVDSDLREVKKHPEFGPRREEILNMIWDMEEEIMGGKEDAA.

Positions 4-236 (LSINNLSMRF…LGVDSDLREV (233 aa)) constitute an ABC transporter domain. Position 41–48 (41–48 (GPSGCGKT)) interacts with ATP.

It belongs to the ABC transporter superfamily. Taurine importer (TC 3.A.1.17.1) family. In terms of assembly, the complex is composed of two ATP-binding proteins (TauB), two transmembrane proteins (TauC) and a solute-binding protein (TauA).

The protein resides in the cell inner membrane. It catalyses the reaction taurine(out) + ATP + H2O = taurine(in) + ADP + phosphate + H(+). In terms of biological role, part of the ABC transporter complex TauABC involved in taurine import. Responsible for energy coupling to the transport system. The sequence is that of Taurine import ATP-binding protein TauB from Roseobacter denitrificans (strain ATCC 33942 / OCh 114) (Erythrobacter sp. (strain OCh 114)).